The chain runs to 542 residues: Importin subunit alpha (542 aa).

Met1 is modified (N-acetylmethionine). Over residues Met1–Lys11 the composition is skewed to polar residues. The region spanning Met1–Ala65 is the IBB domain. The disordered stretch occupies residues Met1–Ala77. The span at Phe27–Ala53 shows a compositional bias: basic and acidic residues. The stretch at Leu89 to Pro122 is one ARM 1; truncated repeat. ARM repeat units follow at residues Ile123–Thr162, Ser163–Ser204, Thr205–Asp251, Trp252–Pro288, Gln289–Asn330, Asp331–Asn372, Thr373–Arg417, and Pro418–Asn471. An NLS binding site 1 region spans residues Asp209–Gln335. Positions Asp419–Ile505 are NLS binding site 2. Residues Glu472 to Tyr508 form an ARM 10; atypical repeat.

This sequence belongs to the importin alpha family. In terms of assembly, forms a complex with an importin beta subunit. In the nucleus, interacts with NUP2 which accelerate release of NLSs, NUP2 is subsequently displaced by CSE1:RanGTP which mediates re-export and recycling. Interacts with HEH2, SHE2, and STS1.

The protein localises to the cytoplasm. It localises to the perinuclear region. Functionally, functions in nuclear protein import as an adapter protein for importin beta nuclear receptors. Binds specifically and directly to substrates containing either a simple or bipartite NLS motif. Promotes docking of import substrates to the nuclear envelope. Together with importin beta KAP95, mediates nuclear import of transcription factor GCN4. Together with tethering factor STS1, targets the proteasome to the nucleus. The polypeptide is Importin subunit alpha (SRP1) (Saccharomyces cerevisiae (strain ATCC 204508 / S288c) (Baker's yeast)).